The following is a 184-amino-acid chain: dCTP deaminase (184 aa).

DCTP is bound by residues 107 to 112 (KSTYAR), 131 to 133 (TLE), Q152, Y166, and Q176. Residue E133 is the Proton donor/acceptor of the active site.

Belongs to the dCTP deaminase family. In terms of assembly, homotrimer.

The catalysed reaction is dCTP + H2O + H(+) = dUTP + NH4(+). Its pathway is pyrimidine metabolism; dUMP biosynthesis; dUMP from dCTP (dUTP route): step 1/2. Functionally, catalyzes the deamination of dCTP to dUTP. The protein is dCTP deaminase of Novosphingobium aromaticivorans (strain ATCC 700278 / DSM 12444 / CCUG 56034 / CIP 105152 / NBRC 16084 / F199).